The following is a 360-amino-acid chain: Phospho-N-acetylmuramoyl-pentapeptide-transferase (360 aa).

Helical transmembrane passes span 27–47 (IVSLLTALVISLWMGPHMIAW), 73–93 (TMGGVMILVAIIVSVLMWANL), 94–114 (SNPYVWCVLLVLAGYGAVGFV), 132–152 (WKYFWQSVIALVVAFSMYAIG), 168–188 (VMPQLGLLYVALAYFVIVGTS), 199–219 (GLAIMPTVFVAAGFALVAWAT), 236–256 (ASELVIVCTAIVGAGLGFLWF), 263–283 (VFMGDVGSLALGGALGTIAVL), 288–308 (FLLVIMGGVFVVETLSVILQV), and 338–358 (VIVRFWIISLMLVLIGLATLK).

It belongs to the glycosyltransferase 4 family. MraY subfamily. It depends on Mg(2+) as a cofactor.

The protein localises to the cell inner membrane. The enzyme catalyses UDP-N-acetyl-alpha-D-muramoyl-L-alanyl-gamma-D-glutamyl-meso-2,6-diaminopimeloyl-D-alanyl-D-alanine + di-trans,octa-cis-undecaprenyl phosphate = di-trans,octa-cis-undecaprenyl diphospho-N-acetyl-alpha-D-muramoyl-L-alanyl-D-glutamyl-meso-2,6-diaminopimeloyl-D-alanyl-D-alanine + UMP. Its pathway is cell wall biogenesis; peptidoglycan biosynthesis. Functionally, catalyzes the initial step of the lipid cycle reactions in the biosynthesis of the cell wall peptidoglycan: transfers peptidoglycan precursor phospho-MurNAc-pentapeptide from UDP-MurNAc-pentapeptide onto the lipid carrier undecaprenyl phosphate, yielding undecaprenyl-pyrophosphoryl-MurNAc-pentapeptide, known as lipid I. The sequence is that of Phospho-N-acetylmuramoyl-pentapeptide-transferase from Pectobacterium carotovorum subsp. carotovorum (strain PC1).